Here is a 240-residue protein sequence, read N- to C-terminus: Biosynthetic peptidoglycan transglycosylase (240 aa).

Residues 15 to 35 (WMVYLGAVVAIAWLATQAFYF) form a helical membrane-spanning segment.

It belongs to the glycosyltransferase 51 family.

The protein localises to the cell inner membrane. It catalyses the reaction [GlcNAc-(1-&gt;4)-Mur2Ac(oyl-L-Ala-gamma-D-Glu-L-Lys-D-Ala-D-Ala)](n)-di-trans,octa-cis-undecaprenyl diphosphate + beta-D-GlcNAc-(1-&gt;4)-Mur2Ac(oyl-L-Ala-gamma-D-Glu-L-Lys-D-Ala-D-Ala)-di-trans,octa-cis-undecaprenyl diphosphate = [GlcNAc-(1-&gt;4)-Mur2Ac(oyl-L-Ala-gamma-D-Glu-L-Lys-D-Ala-D-Ala)](n+1)-di-trans,octa-cis-undecaprenyl diphosphate + di-trans,octa-cis-undecaprenyl diphosphate + H(+). It participates in cell wall biogenesis; peptidoglycan biosynthesis. Peptidoglycan polymerase that catalyzes glycan chain elongation from lipid-linked precursors. This Paraburkholderia phytofirmans (strain DSM 17436 / LMG 22146 / PsJN) (Burkholderia phytofirmans) protein is Biosynthetic peptidoglycan transglycosylase.